Reading from the N-terminus, the 383-residue chain is Homeobox protein knotted-1-like 5 (383 aa).

Disordered regions lie at residues Met1 to Glu35 and Thr52 to Asn73. The ELK domain occupies Glu281–Ile301. Positions Met302–Asn365 form a DNA-binding region, homeobox; TALE-type. Residues Asn361–Ser383 form a disordered region. The segment covering Trp362–Thr373 has biased composition (low complexity). Residues Lys374–Ser383 show a composition bias toward basic residues.

Belongs to the TALE/KNOX homeobox family. As to quaternary structure, may form heterodimeric complex with the TALE/BELL protein BEL1, BLH1 and BLH2. Interacts with OFP1, OFP2, OFP3 and OFP4.

It localises to the nucleus. This is Homeobox protein knotted-1-like 5 (KNAT5) from Arabidopsis thaliana (Mouse-ear cress).